Reading from the N-terminus, the 693-residue chain is FAST kinase domain-containing protein 2, mitochondrial (693 aa).

Phosphoserine is present on residues S110 and S124. The RAP domain maps to 618–675 (VAVLCVSRSAYCLGSSHPRGFLAMKMRHLNAMGFRVILVNNWEMDKLEMEDAVTFLKT). S692 carries the phosphoserine modification.

This sequence belongs to the FAST kinase family. Monomer. Found in a complex with GRSF1, DDX28, DHX30 and FASTKD5. Associates with the 16S mitochondrial rRNA (16S mt-rRNA). Forms a regulatory protein-RNA complex, consisting of RCC1L, NGRN, RPUSD3, RPUSD4, TRUB2, FASTKD2 and 16S mt-rRNA.

The protein resides in the mitochondrion matrix. It is found in the mitochondrion nucleoid. Functionally, plays an important role in assembly of the mitochondrial large ribosomal subunit. As a component of a functional protein-RNA module, consisting of RCC1L, NGRN, RPUSD3, RPUSD4, TRUB2, FASTKD2 and 16S mitochondrial ribosomal RNA (16S mt-rRNA), controls 16S mt-rRNA abundance and is required for intra-mitochondrial translation. May play a role in mitochondrial apoptosis. The chain is FAST kinase domain-containing protein 2, mitochondrial (FASTKD2) from Pongo abelii (Sumatran orangutan).